A 58-amino-acid polypeptide reads, in one-letter code: UPF0391 membrane protein Shewmr4_2671 (58 aa).

Transmembrane regions (helical) follow at residues 6-26 (LMFL…IAGA) and 28-48 (AGIA…SLLV).

Belongs to the UPF0391 family.

It localises to the cell membrane. This Shewanella sp. (strain MR-4) protein is UPF0391 membrane protein Shewmr4_2671.